A 466-amino-acid chain; its full sequence is Argininosuccinate lyase (466 aa).

The protein belongs to the lyase 1 family. Argininosuccinate lyase subfamily.

Its subcellular location is the cytoplasm. The enzyme catalyses 2-(N(omega)-L-arginino)succinate = fumarate + L-arginine. Its pathway is amino-acid biosynthesis; L-arginine biosynthesis; L-arginine from L-ornithine and carbamoyl phosphate: step 3/3. The polypeptide is Argininosuccinate lyase (Brucella anthropi (strain ATCC 49188 / DSM 6882 / CCUG 24695 / JCM 21032 / LMG 3331 / NBRC 15819 / NCTC 12168 / Alc 37) (Ochrobactrum anthropi)).